The following is a 239-amino-acid chain: Purine nucleoside phosphorylase DeoD-type (239 aa).

H5 provides a ligand contact to a purine D-ribonucleoside. Residues G21, R25, R44, and 88–91 (RVGS) contribute to the phosphate site. Residues 180–182 (EME) and 204–205 (SD) each bind a purine D-ribonucleoside. The active-site Proton donor is D205.

It belongs to the PNP/UDP phosphorylase family. In terms of assembly, homohexamer; trimer of homodimers.

It carries out the reaction a purine D-ribonucleoside + phosphate = a purine nucleobase + alpha-D-ribose 1-phosphate. The catalysed reaction is a purine 2'-deoxy-D-ribonucleoside + phosphate = a purine nucleobase + 2-deoxy-alpha-D-ribose 1-phosphate. Its function is as follows. Catalyzes the reversible phosphorolytic breakdown of the N-glycosidic bond in the beta-(deoxy)ribonucleoside molecules, with the formation of the corresponding free purine bases and pentose-1-phosphate. The protein is Purine nucleoside phosphorylase DeoD-type of Salmonella gallinarum (strain 287/91 / NCTC 13346).